We begin with the raw amino-acid sequence, 117 residues long: Large ribosomal subunit protein bL20 (117 aa).

It belongs to the bacterial ribosomal protein bL20 family.

Binds directly to 23S ribosomal RNA and is necessary for the in vitro assembly process of the 50S ribosomal subunit. It is not involved in the protein synthesizing functions of that subunit. This is Large ribosomal subunit protein bL20 from Maridesulfovibrio salexigens (strain ATCC 14822 / DSM 2638 / NCIMB 8403 / VKM B-1763) (Desulfovibrio salexigens).